Consider the following 197-residue polypeptide: MSQLTFIFAAMNAGKSTLLLQAAHNYVERGMAVELYTAALDTRAGLGVIRSRLGIERGASTFNADTVFDHRILERDTACLLIDESQFLRPVQVRQLHRLAHTSQVPIRCYGLRSDFLGHPFAGSAALLTLADEFEEVRAVCGCGKKATMNARLDATGARVSAGEQTLIGGNERYIAMCPRCFYLDSAGEQDAQSTAA.

ATP contacts are provided by residues 9 to 16 (AAMNAGKS) and 83 to 86 (DESQ). Glu84 serves as the catalytic Proton acceptor. Zn(2+)-binding residues include Cys141, Cys143, Cys178, and Cys181.

Belongs to the thymidine kinase family. In terms of assembly, homotetramer.

The protein resides in the cytoplasm. It carries out the reaction thymidine + ATP = dTMP + ADP + H(+). The chain is Thymidine kinase from Albidiferax ferrireducens (strain ATCC BAA-621 / DSM 15236 / T118) (Rhodoferax ferrireducens).